The following is a 470-amino-acid chain: Poly(A) polymerase catalytic subunit (470 aa).

Residues Asp-192 and Asp-194 contribute to the active site.

This sequence belongs to the poxviridae poly(A) polymerase catalytic subunit family. In terms of assembly, heterodimer of a large (catalytic) subunit and a small (regulatory) subunit.

It carries out the reaction RNA(n) + ATP = RNA(n)-3'-adenine ribonucleotide + diphosphate. Its function is as follows. Polymerase that creates the 3'-poly(A) tail of mRNA's. This is Poly(A) polymerase catalytic subunit (PAPL) from Odocoileus hemionus (Mule deer).